A 2616-amino-acid polypeptide reads, in one-letter code: Serine protease ndl (2616 aa).

An N-terminal signal peptide occupies residues 1–43 (MNYNMDEMEATRLLRHPRRWWSIGFGKRIVAISILVIIVLLFS). A phosphoserine mark is found at Ser215 and Ser220. One copy of the WIID 1 repeat lies at 261-269 (ISWIIDGHD). Asn291 is a glycosylation site (N-linked (GlcNAc...) asparagine). Residues 320–328 (ISWILDHFD) form a WIID 2 repeat. The N-linked (GlcNAc...) asparagine glycan is linked to Asn347. The disordered stretch occupies residues 352 to 375 (SASSEPIVDTENTNSDHVPTTENG). N-linked (GlcNAc...) asparagine glycosylation is present at Asn379. The WIID 3 repeat unit spans residues 399–407 (FDWILDGEE). N-linked (GlcNAc...) asparagine glycosylation occurs at Asn417. 2 WIID repeats span residues 446-454 (FDWIIDGRE) and 477-485 (FDWIIDGEE). Residues Asn492 and Asn515 are each glycosylated (N-linked (GlcNAc...) asparagine). The WIID 6 repeat unit spans residues 528 to 536 (FDWIIDGGE). Low complexity predominate over residues 537–547 (SSGEVSTSSTS). Residues 537 to 574 (SSGEVSTSSTSQPKLTTREAISNPESPRSSHPLDNPTS) form a disordered region. A compositionally biased stretch (polar residues) spans 548–565 (QPKLTTREAISNPESPRS). 2 positions are modified to phosphoserine: Ser574 and Ser581. N-linked (GlcNAc...) asparagine glycosylation is present at Asn598. The O-linked (Xyl...) (glycosaminoglycan) serine glycan is linked to Ser794. The interval 798–817 (GQGANIFSKNASPQKPTNGQ) is disordered. The span at 804–817 (FSKNASPQKPTNGQ) shows a compositional bias: polar residues. N-linked (GlcNAc...) asparagine glycosylation occurs at Asn827. Residue Ser829 is glycosylated (O-linked (Xyl...) (glycosaminoglycan) serine). N-linked (GlcNAc...) asparagine glycosylation is present at Asn861. 2 LDL-receptor class A domains span residues 889 to 929 (SRCP…ACTC) and 955 to 1006 (FGCE…QCSM). Disulfide bonds link Cys891–Cys905, Cys899–Cys918, and Cys912–Cys927. In terms of domain architecture, LDL-receptor class A 2; truncated spans 929–956 (CADRVDEERLCDGYEDCPMGEDELGCFG). Cystine bridges form between Cys957–Cys982, Cys964–Cys995, and Cys989–Cys1004. N-linked (GlcNAc...) asparagine glycosylation occurs at Asn975. A Cell attachment site motif is present at residues 1031-1033 (RGD). Asn1064 is a glycosylation site (N-linked (GlcNAc...) asparagine). Phosphoserine occurs at positions 1134 and 1136. Residues 1145-1383 (IVGGSYTSAL…YLDWLEMATT (239 aa)) form the Peptidase S1 1 domain. A disulfide bridge links Cys1170 with Cys1186. Active-site charge relay system residues include His1185 and Asp1233. 6 disulfides stabilise this stretch: Cys1276–Cys1338, Cys1305–Cys1317, Cys1328–Cys1359, Cys1396–Cys1408, Cys1401–Cys1421, and Cys1415–Cys1430. The active-site Charge relay system is Ser1332. In terms of domain architecture, LDL-receptor class A 4 spans 1394–1432 (QLCPGFICVWGGKRCIAKRQRCDRNVDCLGGEDEVGCTY). A glycan (N-linked (GlcNAc...) asparagine) is linked at Asn1445. Disordered stretches follow at residues 1530–1557 (FTVS…PSTN) and 1683–1704 (PTTT…HSEK). 2 stretches are compositionally biased toward low complexity: residues 1537 to 1557 (TSPS…PSTN) and 1683 to 1700 (PTTT…SSST). Positions 1713 to 1743 (FVCKKMSQIVDIMMRCDRKVDCEDGTDELDC) constitute an LDL-receptor class A 5; truncated domain. 6 cysteine pairs are disulfide-bonded: Cys1728–Cys1745, Cys1734–Cys1764, Cys1758–Cys1773, Cys1776–Cys1789, Cys1783–Cys1802, and Cys1796–Cys1811. One can recognise an LDL-receptor class A 6; truncated domain in the interval 1745–1775 (CKDYLKGSLKGLICDGKADCEDLTDEQNCVE). The region spanning 1774–1813 (VECQSNEFRCPLSKTCLPLSSRCDNKVDCKFKEDEKDCFA) is the LDL-receptor class A 7 domain. 3 N-linked (GlcNAc...) asparagine glycosylation sites follow: Asn1878, Asn1956, and Asn2023. Residues 2027 to 2301 (LVNEQLHEAI…LQDIIDKPSC (275 aa)) form the Peptidase S1 2 domain. A disulfide bond links Cys2055 and Cys2071. 5 N-linked (GlcNAc...) asparagine glycosylation sites follow: Asn2144, Asn2173, Asn2197, Asn2237, and Asn2269. The cysteines at positions 2177 and 2230 are disulfide-linked. LDL-receptor class A domains are found at residues 2308–2346 (PDCS…KCRQ), 2349–2389 (QQCA…ICSC), and 2419–2459 (CNCT…YCFG). Disulfide bonds link Cys2310–Cys2320, Cys2315–Cys2333, Cys2327–Cys2344, Cys2351–Cys2364, Cys2358–Cys2377, and Cys2371–Cys2387. The region spanning 2387-2419 (CSCFTYLQATDPSKICDGKRNCWDKSDESSVLC) is the LDL-receptor class A 10; truncated domain. N-linked (GlcNAc...) asparagine glycosylation is present at Asn2420. Intrachain disulfides connect Cys2421/Cys2435, Cys2428/Cys2448, and Cys2442/Cys2457. 2 N-linked (GlcNAc...) asparagine glycosylation sites follow: Asn2556 and Asn2601.

It belongs to the peptidase S1 family. Requires cleavage for activation (presumably). As to expression, follicle.

Its subcellular location is the secreted. It localises to the extracellular space. The protein resides in the extracellular matrix. In terms of biological role, component of the extracellular signaling pathway that establishes the dorsal-ventral pathway of the embryo. A protease cascade involving ndl, gd, snk and ea results in activation of the spz Toll receptor ligand; acts upstream of gd, snk and ea and is required for proteolytic processing of gd. Activation of ea requires activation of the ndl-gd-snk protease cascade and sulfation of a vitelline membrane component by pip. Localized activation of the Toll receptor in the ventral region of the embryo defines cell identities along the dorsal-ventral continuum. The protein is Serine protease ndl of Drosophila melanogaster (Fruit fly).